The chain runs to 435 residues: tRNA-2-methylthio-N(6)-dimethylallyladenosine synthase (435 aa).

In terms of domain architecture, MTTase N-terminal spans 5-120 (KKLFIETLGC…ISEVLHKERA (116 aa)). 6 residues coordinate [4Fe-4S] cluster: cysteine 14, cysteine 51, cysteine 83, cysteine 152, cysteine 156, and cysteine 159. One can recognise a Radical SAM core domain in the interval 138–372 (RTSPYKAYIN…NLAVNILDEK (235 aa)). In terms of domain architecture, TRAM spans 374–435 (KTHLGKIYRV…RTILSGEIVG (62 aa)).

The protein belongs to the methylthiotransferase family. MiaB subfamily. As to quaternary structure, monomer. The cofactor is [4Fe-4S] cluster.

The protein localises to the cytoplasm. The enzyme catalyses N(6)-dimethylallyladenosine(37) in tRNA + (sulfur carrier)-SH + AH2 + 2 S-adenosyl-L-methionine = 2-methylsulfanyl-N(6)-dimethylallyladenosine(37) in tRNA + (sulfur carrier)-H + 5'-deoxyadenosine + L-methionine + A + S-adenosyl-L-homocysteine + 2 H(+). In terms of biological role, catalyzes the methylthiolation of N6-(dimethylallyl)adenosine (i(6)A), leading to the formation of 2-methylthio-N6-(dimethylallyl)adenosine (ms(2)i(6)A) at position 37 in tRNAs that read codons beginning with uridine. The polypeptide is tRNA-2-methylthio-N(6)-dimethylallyladenosine synthase (Sulfurimonas denitrificans (strain ATCC 33889 / DSM 1251) (Thiomicrospira denitrificans (strain ATCC 33889 / DSM 1251))).